We begin with the raw amino-acid sequence, 414 residues long: Serine/threonine-protein kinase 32B (414 aa).

The 261-residue stretch at 23-283 (FQILRAIGKG…LHDIQSVPYL (261 aa)) folds into the Protein kinase domain. ATP contacts are provided by residues 29 to 37 (IGKGSFGKV) and Lys52. Residue Asp146 is the Proton acceptor of the active site. The disordered stretch occupies residues 374–396 (QGQGSQLLDTDSRGGGQAQSKLQ).

It belongs to the protein kinase superfamily. Ser/Thr protein kinase family. It depends on Mg(2+) as a cofactor.

It carries out the reaction L-seryl-[protein] + ATP = O-phospho-L-seryl-[protein] + ADP + H(+). It catalyses the reaction L-threonyl-[protein] + ATP = O-phospho-L-threonyl-[protein] + ADP + H(+). In Homo sapiens (Human), this protein is Serine/threonine-protein kinase 32B.